Reading from the N-terminus, the 363-residue chain is Spermidine/putrescine import ATP-binding protein PotA (363 aa).

One can recognise an ABC transporter domain in the interval 6 to 236; the sequence is VEFKNVIKKY…PINHFVADFI (231 aa). 38 to 45 contributes to the ATP binding site; it reads GPSGCGKT.

The protein belongs to the ABC transporter superfamily. Spermidine/putrescine importer (TC 3.A.1.11.1) family. In terms of assembly, the complex is composed of two ATP-binding proteins (PotA), two transmembrane proteins (PotB and PotC) and a solute-binding protein (PotD).

It localises to the cell membrane. The enzyme catalyses ATP + H2O + polyamine-[polyamine-binding protein]Side 1 = ADP + phosphate + polyamineSide 2 + [polyamine-binding protein]Side 1.. Part of the ABC transporter complex PotABCD involved in spermidine/putrescine import. Responsible for energy coupling to the transport system. The polypeptide is Spermidine/putrescine import ATP-binding protein PotA (Latilactobacillus sakei subsp. sakei (strain 23K) (Lactobacillus sakei subsp. sakei)).